Reading from the N-terminus, the 63-residue chain is DNA gyrase inhibitor YacG (63 aa).

Zn(2+)-binding residues include Cys9, Cys12, Cys28, and Cys32.

The protein belongs to the DNA gyrase inhibitor YacG family. Interacts with GyrB. Requires Zn(2+) as cofactor.

Inhibits all the catalytic activities of DNA gyrase by preventing its interaction with DNA. Acts by binding directly to the C-terminal domain of GyrB, which probably disrupts DNA binding by the gyrase. The polypeptide is DNA gyrase inhibitor YacG (Salmonella paratyphi A (strain AKU_12601)).